Consider the following 238-residue polypeptide: Probable rhamnogalacturonate lyase B (238 aa).

An N-terminal signal peptide occupies residues 1 to 19 (MRLRTSLGVASACASVASA). N-linked (GlcNAc...) asparagine glycosylation is found at Asn27, Asn110, and Asn143.

This sequence belongs to the polysaccharide lyase 4 family.

Its subcellular location is the secreted. The enzyme catalyses Endotype eliminative cleavage of L-alpha-rhamnopyranosyl-(1-&gt;4)-alpha-D-galactopyranosyluronic acid bonds of rhamnogalacturonan I domains in ramified hairy regions of pectin leaving L-rhamnopyranose at the reducing end and 4-deoxy-4,5-unsaturated D-galactopyranosyluronic acid at the non-reducing end.. Pectinolytic enzymes consist of four classes of enzymes: pectin lyase, polygalacturonase, pectin methylesterase and rhamnogalacturonase. Degrades the rhamnogalacturonan I (RG-I) backbone of pectin. This is Probable rhamnogalacturonate lyase B (rglB) from Aspergillus oryzae (strain ATCC 42149 / RIB 40) (Yellow koji mold).